The primary structure comprises 630 residues: tRNA uridine 5-carboxymethylaminomethyl modification enzyme MnmG (630 aa).

13–18 (GGGHAG) contacts FAD. 273–287 (GPRYCPSIEDKVNRF) serves as a coordination point for NAD(+).

The protein belongs to the MnmG family. As to quaternary structure, homodimer. Heterotetramer of two MnmE and two MnmG subunits. It depends on FAD as a cofactor.

It localises to the cytoplasm. NAD-binding protein involved in the addition of a carboxymethylaminomethyl (cmnm) group at the wobble position (U34) of certain tRNAs, forming tRNA-cmnm(5)s(2)U34. The protein is tRNA uridine 5-carboxymethylaminomethyl modification enzyme MnmG of Teredinibacter turnerae (strain ATCC 39867 / T7901).